Consider the following 318-residue polypeptide: Homoserine kinase (318 aa).

Residue 97-107 (PIGSGLGSSAC) participates in ATP binding.

It belongs to the GHMP kinase family. Homoserine kinase subfamily.

It is found in the cytoplasm. It catalyses the reaction L-homoserine + ATP = O-phospho-L-homoserine + ADP + H(+). It participates in amino-acid biosynthesis; L-threonine biosynthesis; L-threonine from L-aspartate: step 4/5. In terms of biological role, catalyzes the ATP-dependent phosphorylation of L-homoserine to L-homoserine phosphate. In Photobacterium profundum (strain SS9), this protein is Homoserine kinase.